The sequence spans 131 residues: Small ribosomal subunit protein uS8 (131 aa).

It belongs to the universal ribosomal protein uS8 family. As to quaternary structure, part of the 30S ribosomal subunit. Contacts proteins S5 and S12.

One of the primary rRNA binding proteins, it binds directly to 16S rRNA central domain where it helps coordinate assembly of the platform of the 30S subunit. The sequence is that of Small ribosomal subunit protein uS8 from Alkalilimnicola ehrlichii (strain ATCC BAA-1101 / DSM 17681 / MLHE-1).